Here is an 87-residue protein sequence, read N- to C-terminus: Translation initiation factor IF-1 (87 aa).

In terms of domain architecture, S1-like spans 16-87; the sequence is LSKEDVIEME…TKGRISYRHK (72 aa).

Belongs to the IF-1 family. As to quaternary structure, component of the 30S ribosomal translation pre-initiation complex which assembles on the 30S ribosome in the order IF-2 and IF-3, IF-1 and N-formylmethionyl-tRNA(fMet); mRNA recruitment can occur at any time during PIC assembly.

Its subcellular location is the cytoplasm. Functionally, one of the essential components for the initiation of protein synthesis. Stabilizes the binding of IF-2 and IF-3 on the 30S subunit to which N-formylmethionyl-tRNA(fMet) subsequently binds. Helps modulate mRNA selection, yielding the 30S pre-initiation complex (PIC). Upon addition of the 50S ribosomal subunit IF-1, IF-2 and IF-3 are released leaving the mature 70S translation initiation complex. This is Translation initiation factor IF-1 from Magnetococcus marinus (strain ATCC BAA-1437 / JCM 17883 / MC-1).